We begin with the raw amino-acid sequence, 198 residues long: Putative coiled-coil domain-containing protein 196 (198 aa).

Residues 24–117 are a coiled coil; it reads NYLKELNEDL…RKEMEMLWNK (94 aa). Composition is skewed to basic and acidic residues over residues 135–144 and 154–167; these read NKTDLQDGKA and TKNE…EKGK. The disordered stretch occupies residues 135–198; that stretch reads NKTDLQDGKA…VSGTSQHHSE (64 aa). Over residues 187–198 the composition is skewed to polar residues; it reads GQVSGTSQHHSE.

This is Putative coiled-coil domain-containing protein 196 from Bos taurus (Bovine).